A 168-amino-acid chain; its full sequence is Protein B-Myc (168 aa).

Disordered stretches follow at residues 26–94 (DDEE…DLPE) and 146–168 (EGASVSPAADVEPATPPDCTCNT). Phosphoserine occurs at positions 59 and 67.

Its subcellular location is the nucleus. Its function is as follows. Seems to act as an inhibitor of cellular proliferation. This is Protein B-Myc (Mycb) from Rattus norvegicus (Rat).